We begin with the raw amino-acid sequence, 342 residues long: Heat-inducible transcription repressor HrcA (342 aa).

The protein belongs to the HrcA family.

Its function is as follows. Negative regulator of class I heat shock genes (grpE-dnaK-dnaJ and groELS operons). Prevents heat-shock induction of these operons. This Mesoplasma florum (strain ATCC 33453 / NBRC 100688 / NCTC 11704 / L1) (Acholeplasma florum) protein is Heat-inducible transcription repressor HrcA.